The following is a 593-amino-acid chain: MIQALLVIICLAVFPHQGSSIILESGNVNDYEVVYPQKVPALLKGGVQNPQPETKYEDTMRYEFQVNGEPVVLHLERNKGLFSEDYTETHYAPDGREITTSPPVQDHCYYHGYIQNEADSSAVISACDGLKGHFEHQGETYFIEPLKISNSEAHAIYKDENVENEDETPEICGVTETTWESDESIEKTSQLTNTPEQDRYLQDKKYIEFYVIVDNRMYRYYNNDKPAIKIRVYEMINAVNTKFRPLKIHIALIGLEIWSNKDKFEVKPAASVTLKSFGEWRETVLLPRKRNDNAQLLTGIDFNGNTVGRAYIGSLCKTNESVAIVQDYNRRISLVASTMTHELGHNLGIHHDKASCICIPGPCIMLKKRTAPAFQFSSCSIREYREYLLRDRPQCILNKPLSTDIVSPPICGNYFVEVGEECDCGSPQACQSACCNAATCQFKGAETECRVAKDDCDLPELCTGQSAECPTDSLQRNGHPCQNNQGYCYNRTCPTLTNQCITLLGPHFTVSPKGCFDLNMRGDDGSFCGMEDGTKIPCAAKDVKCGRLYCTEKNTMSCLIPPNPDGIMAEPGTKCGDGMVCSKGQCVDVQTAY.

Positions Met1–Ser20 are cleaved as a signal peptide. Positions Ile21–Leu191 are excised as a propeptide. Positions Lys205–Pro400 constitute a Peptidase M12B domain. Ca(2+) contacts are provided by Glu208 and Asp292. Intrachain disulfides connect Cys316/Cys395, Cys356/Cys379, and Cys358/Cys363. Asn319 carries an N-linked (GlcNAc...) asparagine glycan. Position 341 (His341) interacts with Zn(2+). Residue Glu342 is part of the active site. Residues His345 and His351 each contribute to the Zn(2+) site. Residues Cys395, Asn398, Ile410, Asn413, Phe415, Glu417, Glu420, and Asp423 each contribute to the Ca(2+) site. Residues Pro408–Asn477 enclose the Disintegrin domain. Cystine bridges form between Cys422–Cys435, Cys424–Cys430, Cys434–Cys440, Cys449–Cys469, Cys456–Cys488, Cys481–Cys493, Cys500–Cys550, Cys515–Cys558, Cys528–Cys538, Cys545–Cys581, and Cys575–Cys586. The D/ECD-tripeptide motif lies at Asp455–Asp457. Asp457, Leu458, Glu460, and Asp472 together coordinate Ca(2+). N-linked (GlcNAc...) asparagine glycosylation occurs at Asn490.

Belongs to the venom metalloproteinase (M12B) family. P-III subfamily. P-IIIa sub-subfamily. In terms of assembly, monomer. It depends on Zn(2+) as a cofactor. Expressed by the venom gland.

The protein localises to the secreted. Inhibited by EDTA, EGTA, 1,10-phenanthroline and DTT. Not inhibited by PMSF and SBTI. Functionally, snake venom zinc protease that inhibits the classical and alternative pathways of complement by cleaving factor B, C6, C7, and C8. Also slowly and selectively degrades alpha-chain of fibrinogen (FGA), and shows edema-inducing activity. The polypeptide is Zinc metalloproteinase-disintegrin-like atrase-B (Naja atra (Chinese cobra)).